The following is a 782-amino-acid chain: Cysteine-rich protein 2-binding protein (782 aa).

The residue at position 4 (Ser-4) is a Phosphoserine. Residues 13-33 are disordered; that stretch reads RHDDEATRTSTSEGLEEGEVE. Lys-231 bears the N6-acetyllysine mark. Residues 251-282 are disordered; sequence PVESAMELKEKRSRTQEAKDIRRAQKEAAGFL. Basic and acidic residues predominate over residues 256–276; it reads MELKEKRSRTQEAKDIRRAQK. At Ser-285 the chain carries Phosphoserine. Position 292 is an N6-acetyllysine (Lys-292). Low complexity predominate over residues 315-335; the sequence is LSSSDRTPLTSPSPSPSLDFS. Disordered stretches follow at residues 315–346 and 400–460; these read LSSSDRTPLTSPSPSPSLDFSAPGTPASHSAT and VRKK…EPRY. Basic and acidic residues-rich tracts occupy residues 405–426 and 446–459; these read RGPEQIKQEVESEEEKPDRMDI and KPQLEKDTKPKEPR. At Ser-416 the chain carries Phosphoserine. Residues 638-782 form the N-acetyltransferase domain; that stretch reads LDYCYVRPNH…KHAFFLRLRR (145 aa).

In terms of assembly, interacts with the LIM 1 domain of CSRP2. Component of the ADA2A-containing complex (ATAC), composed of CSRP2BP, KAT2A, TADA2L, TADA3L, ZZ3, MBIP, WDR5, YEATS2, CCDC101 and DR1. In the complex, it probably interacts directly with KAT2A, MBIP and WDR5. In terms of tissue distribution, expressed in skeletal muscle, heart, lung, placenta, brain, liver, pancreas and kidney. High expression in skeletal muscle and heart. Lower expression in lung.

The protein localises to the nucleus. Its subcellular location is the cytoplasm. Component of the ATAC complex, a complex with histone acetyltransferase activity on histones H3 and H4. May function as a scaffold for the ATAC complex to promote ATAC complex stability. Has also weak histone acetyltransferase activity toward histone H4. Required for the normal progression through G1 and G2/M phases of the cell cycle. The polypeptide is Cysteine-rich protein 2-binding protein (Homo sapiens (Human)).